We begin with the raw amino-acid sequence, 2065 residues long: WD repeat-containing protein 81 (2065 aa).

One can recognise a BEACH domain in the interval 325–617; sequence LCRNCQDELK…EPPHFGRVNV (293 aa). Disordered regions lie at residues 1082 to 1111, 1156 to 1230, 1271 to 1290, and 1595 to 1642; these read EEEE…GGSG, TTVG…VEDR, GEKN…DSEE, and ASPG…GGDI. Residues 1101–1111 show a composition bias toward gly residues; that stretch reads KVGGGSGGGSG. The segment covering 1156 to 1169 has biased composition (polar residues); it reads TTVGTKQQNQSTAN. Residues 1213-1228 are compositionally biased toward acidic residues; sequence DGEDGGELEDEEETVE. Residues 1624-1637 show a composition bias toward low complexity; that stretch reads SRSPFPAPSSTSTP. WD repeat units follow at residues 1767 to 1806, 1813 to 1853, 1906 to 1945, 1948 to 1986, and 2035 to 2065; these read GHSG…DGTR, TYTE…NIRC, LSAG…VLRG, GHEG…PLHQ, and NFRG…RLLA.

The protein belongs to the WD repeat WDR81 family. Widely expressed.

The protein resides in the early endosome membrane. The protein localises to the late endosome membrane. It is found in the lysosome membrane. Its subcellular location is the cytoplasmic vesicle. It localises to the autophagosome membrane. The protein resides in the mitochondrion. The protein localises to the cytoplasm. It is found in the cytosol. Its function is as follows. Functions as a negative regulator of the PI3 kinase/PI3K activity associated with endosomal membranes. By modifying the phosphatidylinositol 3-phosphate/PtdInsP3 content of endosomal membranes may regulate endosome fusion, recycling, sorting and early to late endosome transport. May also play a role in aggrephagy, the macroautophagic degradation of ubiquitinated protein aggregates. May also be involved in maintenance of normal mitochondrial structure and organization. This chain is WD repeat-containing protein 81 (wdr81), found in Danio rerio (Zebrafish).